Reading from the N-terminus, the 558-residue chain is Dimethylaniline monooxygenase [N-oxide-forming] 4 (558 aa).

FAD is bound by residues 9-13 (GAGVS), Glu32, and 40-41 (LW). Residues 60–61 (TN) and 195–198 (TGGD) each bind NADP(+). The chain crosses the membrane as a helical span at residues 517–537 (AWGAPVLLASLLLICKSSLFL).

It belongs to the FMO family. It depends on FAD as a cofactor. In terms of tissue distribution, liver.

It localises to the microsome membrane. Its subcellular location is the endoplasmic reticulum membrane. It catalyses the reaction N,N-dimethylaniline + NADPH + O2 + H(+) = N,N-dimethylaniline N-oxide + NADP(+) + H2O. In terms of biological role, this protein is involved in the oxidative metabolism of a variety of xenobiotics such as drugs and pesticides. In Homo sapiens (Human), this protein is Dimethylaniline monooxygenase [N-oxide-forming] 4 (FMO4).